Here is a 160-residue protein sequence, read N- to C-terminus: Transcriptional repressor NrdR (160 aa).

Residues 3 to 34 fold into a zinc finger; sequence CPFCGNADTQVVDSRVSEEGDTIRRRRRCLSC. One can recognise an ATP-cone domain in the interval 49–139; it reads PSVVKRDGSR…VYKSFEDIGE (91 aa).

This sequence belongs to the NrdR family. It depends on Zn(2+) as a cofactor.

Functionally, negatively regulates transcription of bacterial ribonucleotide reductase nrd genes and operons by binding to NrdR-boxes. This Bordetella bronchiseptica (strain ATCC BAA-588 / NCTC 13252 / RB50) (Alcaligenes bronchisepticus) protein is Transcriptional repressor NrdR.